Here is a 1247-residue protein sequence, read N- to C-terminus: MLRLVAACPESCVVCTKDVTLCHQLTYIVAAPMTTRVLIITDGYLSSIESTNLSLLFNLALLSLSRNGIEDVQEDALHGLTMLRTLLLEHNQISSSSLTDHTFSKLHSLQVLVLSNNALRTLRGSWFRNTSGLTRLQLDGNQITNLTDSSFGGTNLHSLRYLDLSNNFISYIGKDAFRPLPQLQEVDLSRNRLAHMPDVFTPLKQLILLSLDKNQWSCTCDLHPLARFLRNYIKSSAHTLRNAKDLNCQPSTAAVAAAQSVLRLSETNCDSKAPNFTLVLKDRSPLLPGPDVALLTVLGFAGAVGLTCLGLVVFNWKLHQGKANEHTSENLCCRTFDEPLCAHEARNYHTKGYCNCHLTQENEIKVMSTVGSRKEMPLLQENSHQATSASESATLDGSFRNLKKKDRGVGSTLFCQDGRLLHSECSEPPGNMRAFNEAGLLTTYNPRKVQKLWNLEPGEVQPQTLQHHIIRTEDISSDIFRRRYATPASALAGESLEKRLTNESWQPPIEKEDNGLHPHRQRHFITSSSSKPCEPEEHYVQKIVQKNRSKYDDPCGLLKQSKPRYFQPNNSLICKYVPCEQFEDYMKEKKPNRRQHSKPEKEQIQINSAIEKFLMSEDNIDLSGLSTKTKKAYSPKRVIFHDPDLVEINRSMMSPKISTPWKRQKNQSNQLTKLDVKKFSNTGERNKGEKWFTNSWVLKRKRTPQSDLKGKIKGQNLKLNLHPFRKVRVHPEKSLSSLPKQCKQVLLPPKKLSKTSETEAKINTVCSADFLQQSESSNYVRLTSKRLPLKHDSKQTPYYQRNTKRAPLLSANNLRVVNQSSIESSCYSAGHIPDGNTSKLPQPTPTDAEHRHSHSQFSTEQMEDATQLESKVLSYLATTWENTGSDVLPFQHSRRATDQGTTESTEHMGQNVSKTSELNQFSLSPRNQTQLLDAHKTDSYNKEYTLDQNEALQHREQNSSHAQLENKEKTLMTKPQISHQIVENCIMDKEENDVEKKLSKTETYDSSLIPQTQSKNNLSFMKTNSIPYQNRIELPKDISTSPVSSQAVWHLTNSSEKGIDSTNALPRNDGTEALEIKIVGKEEKNMLDESKTDSSMLTQISQMTLKGITKERQQTWENGTSEKYILHDASSAEETITAKDLSITSSHETQNRILCSEVDPEVNSNVHNFREVQNIQPDKDSAHKEGAMTVETHEALSFLPGLKDSFEAENEVFLVPSRINEAENSAPKPVLYPPSAEYATTSPLETE.

LRR repeat units follow at residues threonine 34–leucine 55, asparagine 58–glycine 79, methionine 82–threonine 102, serine 108–asparagine 129, glycine 132–glycine 153, serine 158–proline 179, and glutamine 182–leucine 203. Residues asparagine 214–serine 271 enclose the LRRCT domain. The chain crosses the membrane as a helical span at residues leucine 294 to phenylalanine 314. Disordered regions lie at residues serine 828 to threonine 866, valine 887 to asparagine 927, and glutamate 1223 to glutamate 1247. 2 stretches are compositionally biased toward polar residues: residues aspartate 898–asparagine 927 and tyrosine 1238–glutamate 1247.

It localises to the membrane. This Homo sapiens (Human) protein is Leucine-rich repeat-containing protein 53 (LRRC53).